The sequence spans 254 residues: Small ribosomal subunit protein eS1 (254 aa).

Ala2 carries the N-acetylalanine; partial modification.

Belongs to the eukaryotic ribosomal protein eS1 family. In terms of assembly, component of the small ribosomal subunit. Mature ribosomes consist of a small (40S) and a large (60S) subunit. The 40S subunit contains about 33 different proteins and 1 molecule of RNA (18S). The 60S subunit contains about 49 different proteins and 3 molecules of RNA (25S, 5.8S and 5S).

It localises to the cytoplasm. This chain is Small ribosomal subunit protein eS1, found in Zygosaccharomyces rouxii (strain ATCC 2623 / CBS 732 / NBRC 1130 / NCYC 568 / NRRL Y-229).